Here is a 363-residue protein sequence, read N- to C-terminus: Probable dual-specificity RNA methyltransferase RlmN (363 aa).

The active-site Proton acceptor is the E99. The Radical SAM core domain maps to 105–341; that stretch reads SENRMTACVS…VTVRKSHGAS (237 aa). C112 and C346 are disulfide-bonded. 3 residues coordinate [4Fe-4S] cluster: C119, C123, and C126. S-adenosyl-L-methionine contacts are provided by residues 171–172, S204, 227–229, and N303; these read GE and SLH. Residue C346 is the S-methylcysteine intermediate of the active site.

It belongs to the radical SAM superfamily. RlmN family. Requires [4Fe-4S] cluster as cofactor.

Its subcellular location is the cytoplasm. It catalyses the reaction adenosine(2503) in 23S rRNA + 2 reduced [2Fe-2S]-[ferredoxin] + 2 S-adenosyl-L-methionine = 2-methyladenosine(2503) in 23S rRNA + 5'-deoxyadenosine + L-methionine + 2 oxidized [2Fe-2S]-[ferredoxin] + S-adenosyl-L-homocysteine. The catalysed reaction is adenosine(37) in tRNA + 2 reduced [2Fe-2S]-[ferredoxin] + 2 S-adenosyl-L-methionine = 2-methyladenosine(37) in tRNA + 5'-deoxyadenosine + L-methionine + 2 oxidized [2Fe-2S]-[ferredoxin] + S-adenosyl-L-homocysteine. Functionally, specifically methylates position 2 of adenine 2503 in 23S rRNA and position 2 of adenine 37 in tRNAs. In Chlorobium phaeobacteroides (strain DSM 266 / SMG 266 / 2430), this protein is Probable dual-specificity RNA methyltransferase RlmN.